We begin with the raw amino-acid sequence, 345 residues long: Tyrosine--tRNA ligase (345 aa).

Tyr-36 serves as a coordination point for L-tyrosine. The 'HIGH' region signature appears at 41–49 (PTGEMHIGH). Tyr-163, Gln-167, Asp-170, and Gln-185 together coordinate L-tyrosine.

The protein belongs to the class-I aminoacyl-tRNA synthetase family. TyrS type 3 subfamily. As to quaternary structure, homodimer.

The protein localises to the cytoplasm. The enzyme catalyses tRNA(Tyr) + L-tyrosine + ATP = L-tyrosyl-tRNA(Tyr) + AMP + diphosphate + H(+). In terms of biological role, catalyzes the attachment of tyrosine to tRNA(Tyr) in a two-step reaction: tyrosine is first activated by ATP to form Tyr-AMP and then transferred to the acceptor end of tRNA(Tyr). In Natronomonas pharaonis (strain ATCC 35678 / DSM 2160 / CIP 103997 / JCM 8858 / NBRC 14720 / NCIMB 2260 / Gabara) (Halobacterium pharaonis), this protein is Tyrosine--tRNA ligase.